The sequence spans 288 residues: Bifunctional protein FolD (288 aa).

NADP(+) contacts are provided by residues 166-168 (GAS) and Ile-232.

The protein belongs to the tetrahydrofolate dehydrogenase/cyclohydrolase family. In terms of assembly, homodimer.

It catalyses the reaction (6R)-5,10-methylene-5,6,7,8-tetrahydrofolate + NADP(+) = (6R)-5,10-methenyltetrahydrofolate + NADPH. It carries out the reaction (6R)-5,10-methenyltetrahydrofolate + H2O = (6R)-10-formyltetrahydrofolate + H(+). Its pathway is one-carbon metabolism; tetrahydrofolate interconversion. In terms of biological role, catalyzes the oxidation of 5,10-methylenetetrahydrofolate to 5,10-methenyltetrahydrofolate and then the hydrolysis of 5,10-methenyltetrahydrofolate to 10-formyltetrahydrofolate. In Acidithiobacillus ferrooxidans (strain ATCC 23270 / DSM 14882 / CIP 104768 / NCIMB 8455) (Ferrobacillus ferrooxidans (strain ATCC 23270)), this protein is Bifunctional protein FolD.